Reading from the N-terminus, the 123-residue chain is Small ribosomal subunit protein uS12 (123 aa).

Asp89 carries the 3-methylthioaspartic acid modification.

Belongs to the universal ribosomal protein uS12 family. Part of the 30S ribosomal subunit. Contacts proteins S8 and S17. May interact with IF1 in the 30S initiation complex.

With S4 and S5 plays an important role in translational accuracy. Functionally, interacts with and stabilizes bases of the 16S rRNA that are involved in tRNA selection in the A site and with the mRNA backbone. Located at the interface of the 30S and 50S subunits, it traverses the body of the 30S subunit contacting proteins on the other side and probably holding the rRNA structure together. The combined cluster of proteins S8, S12 and S17 appears to hold together the shoulder and platform of the 30S subunit. The chain is Small ribosomal subunit protein uS12 from Bartonella tribocorum (strain CIP 105476 / IBS 506).